The following is a 296-amino-acid chain: Putative S-adenosyl-L-methionine-dependent methyltransferase MAV_4764 (296 aa).

S-adenosyl-L-methionine contacts are provided by residues aspartate 121 and 150–151 (DL).

The protein belongs to the UPF0677 family.

Exhibits S-adenosyl-L-methionine-dependent methyltransferase activity. The polypeptide is Putative S-adenosyl-L-methionine-dependent methyltransferase MAV_4764 (Mycobacterium avium (strain 104)).